A 116-amino-acid polypeptide reads, in one-letter code: Nascent polypeptide-associated complex protein (116 aa).

One can recognise an NAC-A/B domain in the interval 6-70 (PKQMKDLERM…AREESKQQQK (65 aa)).

This sequence belongs to the NAC-alpha family. As to quaternary structure, homodimer. Interacts with the ribosome. Binds ribosomal RNA.

Its function is as follows. Contacts the emerging nascent chain on the ribosome. The polypeptide is Nascent polypeptide-associated complex protein (Sulfolobus acidocaldarius (strain ATCC 33909 / DSM 639 / JCM 8929 / NBRC 15157 / NCIMB 11770)).